A 429-amino-acid chain; its full sequence is 4-hydroxybutyrate coenzyme A transferase (429 aa).

Residue 215–219 (GIGAI) participates in CoA binding. Catalysis depends on E238, which acts as the 5-glutamyl coenzyme A thioester intermediate. Position 336 (G336) interacts with CoA.

The protein belongs to the acetyl-CoA hydrolase/transferase family.

This Clostridium kluyveri (strain ATCC 8527 / DSM 555 / NBRC 12016 / NCIMB 10680 / K1) protein is 4-hydroxybutyrate coenzyme A transferase (cat2).